A 199-amino-acid chain; its full sequence is Large ribosomal subunit protein bL25 (199 aa).

The segment at 1–21 is disordered; sequence MNIEKTLSVQKREGYGKGPSG.

Belongs to the bacterial ribosomal protein bL25 family. CTC subfamily. Part of the 50S ribosomal subunit; part of the 5S rRNA/L5/L18/L25 subcomplex. Contacts the 5S rRNA. Binds to the 5S rRNA independently of L5 and L18.

Functionally, this is one of the proteins that binds to the 5S RNA in the ribosome where it forms part of the central protuberance. The chain is Large ribosomal subunit protein bL25 from Desulfovibrio desulfuricans (strain ATCC 27774 / DSM 6949 / MB).